The sequence spans 571 residues: Glutamate--tRNA ligase (571 aa).

Positions 114–124 (PNPNGPWHVGH) match the 'HIGH' region motif. The segment at 431 to 453 (KPLAGGPESASPPLHPNDEDRGR) is disordered.

The protein belongs to the class-I aminoacyl-tRNA synthetase family. Glutamate--tRNA ligase type 2 subfamily.

The protein localises to the cytoplasm. The catalysed reaction is tRNA(Glu) + L-glutamate + ATP = L-glutamyl-tRNA(Glu) + AMP + diphosphate. Catalyzes the attachment of glutamate to tRNA(Glu) in a two-step reaction: glutamate is first activated by ATP to form Glu-AMP and then transferred to the acceptor end of tRNA(Glu). The chain is Glutamate--tRNA ligase from Natronomonas pharaonis (strain ATCC 35678 / DSM 2160 / CIP 103997 / JCM 8858 / NBRC 14720 / NCIMB 2260 / Gabara) (Halobacterium pharaonis).